A 677-amino-acid polypeptide reads, in one-letter code: Methionine--tRNA ligase (677 aa).

The 'HIGH' region signature appears at 15–25 (PYANGSIHLGH). Residues Cys-146, Cys-149, Cys-159, and Cys-162 each contribute to the Zn(2+) site. Residues 333 to 337 (KMSKS) carry the 'KMSKS' region motif. Lys-336 serves as a coordination point for ATP. Positions 575–677 (DFAKIDLRVA…SGAKPGQQVK (103 aa)) constitute a tRNA-binding domain.

The protein belongs to the class-I aminoacyl-tRNA synthetase family. MetG type 1 subfamily. As to quaternary structure, homodimer. Requires Zn(2+) as cofactor.

Its subcellular location is the cytoplasm. It catalyses the reaction tRNA(Met) + L-methionine + ATP = L-methionyl-tRNA(Met) + AMP + diphosphate. Is required not only for elongation of protein synthesis but also for the initiation of all mRNA translation through initiator tRNA(fMet) aminoacylation. The sequence is that of Methionine--tRNA ligase from Cronobacter sakazakii (strain ATCC BAA-894) (Enterobacter sakazakii).